A 407-amino-acid chain; its full sequence is Argininosuccinate synthase (407 aa).

ATP contacts are provided by residues 12-20 (AYSGGLDTS) and Ala-39. 2 residues coordinate L-citrulline: Tyr-92 and Ser-97. Gly-122 is a binding site for ATP. L-aspartate-binding residues include Thr-124, Asn-128, and Asp-129. Position 128 (Asn-128) interacts with L-citrulline. The L-citrulline site is built by Arg-132, Ser-182, Ser-191, Glu-267, and Tyr-279.

The protein belongs to the argininosuccinate synthase family. Type 1 subfamily. In terms of assembly, homotetramer.

The protein localises to the cytoplasm. The catalysed reaction is L-citrulline + L-aspartate + ATP = 2-(N(omega)-L-arginino)succinate + AMP + diphosphate + H(+). It participates in amino-acid biosynthesis; L-arginine biosynthesis; L-arginine from L-ornithine and carbamoyl phosphate: step 2/3. This chain is Argininosuccinate synthase, found in Campylobacter fetus subsp. fetus (strain 82-40).